The sequence spans 516 residues: 4-hydroxybenzoate brominase (decarboxylating) (516 aa).

Positions 13, 32, 40, 41, 51, 102, and 365 each coordinate FAD.

The protein belongs to the FMO family. The cofactor is FAD.

It carries out the reaction 2 bromide + 4-hydroxybenzoate + 2 NADPH + 2 O2 + 5 H(+) = 2,4-dibromophenol + CO2 + 2 NADP(+) + 4 H2O. The enzyme catalyses bromide + 4-hydroxybenzoate + NADPH + O2 + 2 H(+) = 3-bromo-4-hydroxybenzoate + NADP(+) + 2 H2O. It catalyses the reaction 3-bromo-4-hydroxybenzoate + bromide + NADPH + O2 + 3 H(+) = 2,4-dibromophenol + CO2 + NADP(+) + 2 H2O. The catalysed reaction is 3,4-dihydroxybenzoate + 2 bromide + 2 NADPH + 2 O2 + 5 H(+) = 3,5-dibromobenzene-1,2-diol + CO2 + 2 NADP(+) + 4 H2O. It carries out the reaction 3,4-dihydroxybenzoate + bromide + NADPH + O2 + 2 H(+) = 3-bromo-4,5-dihydroxybenzoate + NADP(+) + 2 H2O. The enzyme catalyses 3-bromo-4,5-dihydroxybenzoate + bromide + NADPH + O2 + 3 H(+) = 3,5-dibromobenzene-1,2-diol + CO2 + NADP(+) + 2 H2O. In terms of biological role, brominase involved in the biosynthesis of polybrominated aromatic organic compounds. Catalyzes the bromination of 4-hydroxybenzoate (4-HBA) to 3-bromo-4-hydroxybenzoate, followed by bromination and decarboxylation of 3-bromo-4-hydroxybenzoate to 2,4-dibromophenol. Can also use 3,4-dihydroxybenzoate, with lower efficiency, forming 3-bromo-4,5-dihydroxybenzoate and 3,5-dibromobenzene-1,2-diol. The chain is 4-hydroxybenzoate brominase (decarboxylating) from Marinomonas mediterranea (strain ATCC 700492 / JCM 21426 / NBRC 103028 / MMB-1).